A 104-amino-acid polypeptide reads, in one-letter code: Cuticle protein 67, isoform B (104 aa).

Tandem repeats lie at residues 7 to 10 (AAPA), 14 to 17 (AAPA), 21 to 24 (AAPA), 28 to 31 (AAPA), 85 to 88 (AAPA), 92 to 95 (AAPA), and 98 to 101 (AAPA).

Its function is as follows. Component of the cuticle of migratory locust which contains more than 100 different structural proteins. This Locusta migratoria (Migratory locust) protein is Cuticle protein 67, isoform B.